Here is a 227-residue protein sequence, read N- to C-terminus: uncharacterized protein (227 aa).

Helical transmembrane passes span 12–32 and 80–100; these read IVLF…YLYA and IILI…KIPL.

It is found in the cell membrane. This is an uncharacterized protein from Methanocaldococcus jannaschii (strain ATCC 43067 / DSM 2661 / JAL-1 / JCM 10045 / NBRC 100440) (Methanococcus jannaschii).